Reading from the N-terminus, the 466-residue chain is Adenosylhomocysteinase (466 aa).

T57, D132, and E192 together coordinate substrate. 193 to 195 contacts NAD(+); that stretch reads TTT. Residues K222 and D226 each coordinate substrate. NAD(+)-binding positions include N227, 256–261, E279, N314, 335–337, and N380; these read GYGDVG and IGH.

This sequence belongs to the adenosylhomocysteinase family. NAD(+) is required as a cofactor.

The protein resides in the cytoplasm. It carries out the reaction S-adenosyl-L-homocysteine + H2O = L-homocysteine + adenosine. The protein operates within amino-acid biosynthesis; L-homocysteine biosynthesis; L-homocysteine from S-adenosyl-L-homocysteine: step 1/1. May play a key role in the regulation of the intracellular concentration of adenosylhomocysteine. The polypeptide is Adenosylhomocysteinase (Brucella melitensis biotype 2 (strain ATCC 23457)).